A 1377-amino-acid chain; its full sequence is Dicer-like protein 2 (1377 aa).

Residues 23 to 203 (MFEASLQENI…LSMIESNMNA (181 aa)) enclose the Helicase ATP-binding domain. Residue 36–43 (MDTGSGKT) participates in ATP binding. Positions 144–147 (DEAH) match the DEAH box motif. The Helicase C-terminal domain occupies 367–544 (KLEALISFLS…ALALETMAEV (178 aa)). The Dicer dsRNA-binding fold domain maps to 563–657 (AVARLHHFCS…LPLTRKPELR (95 aa)). 2 RNase III domains span residues 916-1056 (ATRL…MDGG) and 1090-1274 (NDSL…VDSR). Mg(2+) contacts are provided by E1129, D1260, and E1263.

The protein belongs to the helicase family. Dicer subfamily. It depends on Mg(2+) as a cofactor. Mn(2+) serves as cofactor.

Functionally, dicer-like endonuclease involved in cleaving double-stranded RNA in the RNA interference (RNAi) pathway. Produces 21 to 25 bp dsRNAs (siRNAs) which target the selective destruction of homologous RNAs leading to sequence-specific suppression of gene expression, called post-transcriptional gene silencing (PTGS). Part of a broad host defense response against viral infection and transposons. In Aspergillus terreus (strain NIH 2624 / FGSC A1156), this protein is Dicer-like protein 2 (dcl2).